We begin with the raw amino-acid sequence, 120 residues long: Glycine cleavage system H protein (120 aa).

The region spanning 19–101 is the Lipoyl-binding domain; that stretch reads DGTVGITDHA…YEGGWLFKLE (83 aa). Lys60 is subject to N6-lipoyllysine.

This sequence belongs to the GcvH family. In terms of assembly, the glycine cleavage system is composed of four proteins: P, T, L and H. Requires (R)-lipoate as cofactor.

Its function is as follows. The glycine cleavage system catalyzes the degradation of glycine. The H protein shuttles the methylamine group of glycine from the P protein to the T protein. This is Glycine cleavage system H protein from Deinococcus deserti (strain DSM 17065 / CIP 109153 / LMG 22923 / VCD115).